The chain runs to 533 residues: DELLA protein 2 (533 aa).

Positions 1 to 12 (MKREHKLEHEDM) are enriched in basic and acidic residues. Positions 1–24 (MKREHKLEHEDMSSGSGKSGVCWE) are disordered. A DELLA motif motif is present at residues 31–35 (DELLA). The GRAS domain occupies 157-522 (VETQEKGIRL…RPLIATSAWK (366 aa)). The interval 164–218 (IRLVHSLMACAEAVEQNNLKMAEALVKQIGYLAVSQEGAMRKVATYFAEGLARRI) is leucine repeat I (LRI). A required for possible homodimerization region spans residues 166-203 (LVHSLMACAEAVEQNNLKMAEALVKQIGYLAVSQEGAM). The short motif at 171–175 (MACAE) is the LxCxE motif; degenerate element. The VHIID stretch occupies residues 232 to 297 (QIHFYETCPN…GGPPAFRLTG (66 aa)). A VHIID motif is present at residues 263 to 267 (VHVID). The tract at residues 311–343 (QVGWRLAQFAQTIHVQFEYRGFVANSLADLDAS) is leucine repeat II (LRII). Positions 355-443 (VAVNSVFELH…EVYLGKQICN (89 aa)) are PFYRE. Residues 363–367 (LHKLN) carry the LXXLL motif; degenerate motif. The tract at residues 446 to 522 (ACEGTDRVER…RPLIATSAWK (77 aa)) is SAW.

It belongs to the GRAS family. DELLA subfamily. May be a homodimer. Post-translationally, ubiquitinated. Upon GA application it is ubiquitinated, leading to its subsequent degradation.

The protein localises to the nucleus. Functionally, probable transcriptional regulator that acts as a repressor of the gibberellin (GA) signaling pathway. Probably acts by participating in large multiprotein complexes that repress transcription of GA-inducible genes. Upon GA application, it is degraded by the proteasome, allowing the GA signaling pathway. Together with DELLA1, required to enable arbuscule development during arbuscular mycorrhizal (AM) symbiosis with AM fungi (e.g. Glomus versiforme) via the regulation of RAM1 which, in turn, regulates various AM genes (e.g. NSP1, NSP2, PT4, LEC5, RAM2, EXO70I, STR and RAD1). The sequence is that of DELLA protein 2 from Medicago truncatula (Barrel medic).